Consider the following 198-residue polypeptide: Glycerol-3-phosphate acyltransferase (198 aa).

5 consecutive transmembrane segments (helical) span residues 2 to 22 (IIDL…FGVL), 53 to 73 (LGFI…VIAT), 79 to 99 (PFMY…SCFL), 113 to 133 (VLIP…TFFI), and 152 to 172 (IILF…IMAL).

This sequence belongs to the PlsY family. In terms of assembly, probably interacts with PlsX.

The protein resides in the cell membrane. The enzyme catalyses an acyl phosphate + sn-glycerol 3-phosphate = a 1-acyl-sn-glycero-3-phosphate + phosphate. Its pathway is lipid metabolism; phospholipid metabolism. Catalyzes the transfer of an acyl group from acyl-phosphate (acyl-PO(4)) to glycerol-3-phosphate (G3P) to form lysophosphatidic acid (LPA). This enzyme utilizes acyl-phosphate as fatty acyl donor, but not acyl-CoA or acyl-ACP. This Lawsonia intracellularis (strain PHE/MN1-00) protein is Glycerol-3-phosphate acyltransferase.